We begin with the raw amino-acid sequence, 546 residues long: MLLFQDLRKDIYEIVSKRFRISENDVYLDDTGHSDITIRVFRILKSPDGGENAVMEIVRSISEKDYVEKALSEGGYINVWIKRTYMLREVLESIEKSGTYPDVFQEAERVSVEHTSANPTGPLHIGRARNSIIGDSIYRILSRYGYRTVRQYFVNDSGKQMISLYTAYIKYGGPITIENLLENYQKIYREMEKDQSIEKEIEKNIERYENADPEVFGTLRKIAGVMLDGIASTLKRIGIEFDEFDWESDLLLNGSVRKAIDMLETKEEDSARYIEISGKKVFLTRKDGTTLYFARDIAYHLFKAENSEWIIDVLGEDHKDHAKSLNHVLKEMLKLENRVSFMYYSFITLETGKMSTRRGNIVTLQDLVDRTYDEALKIVNEKRPDLSEEERKKIAEVIASSAVRYSIIRVSAPKPITFRWEEALNFESNSAPFIMYSHARAASILDKAPEPEQSYGMDMPKEEADLVKAMYVYPYYLKDAAQDLKPDLIAAYLISLVQKFNDFYGACRVIGTDPLTYARRIRIVKAYKQILSDAGDLIGIKMLDQM.

The short motif at 117 to 127 is the 'HIGH' region element; the sequence is ANPTGPLHIGR.

It belongs to the class-I aminoacyl-tRNA synthetase family.

It is found in the cytoplasm. It carries out the reaction tRNA(Arg) + L-arginine + ATP = L-arginyl-tRNA(Arg) + AMP + diphosphate. In Thermoplasma acidophilum (strain ATCC 25905 / DSM 1728 / JCM 9062 / NBRC 15155 / AMRC-C165), this protein is Arginine--tRNA ligase.